Here is a 397-residue protein sequence, read N- to C-terminus: Elongation factor Tu (397 aa).

The 198-residue stretch at 10 to 207 (KPHCNIGTIG…AVDEYIPQPE (198 aa)) folds into the tr-type G domain. The G1 stretch occupies residues 19–26 (GHVDHGKT). Residue 19 to 26 (GHVDHGKT) coordinates GTP. Mg(2+) is bound at residue T26. The segment at 61 to 65 (GITIS) is G2. A G3 region spans residues 82-85 (DCPG). GTP contacts are provided by residues 82–86 (DCPGH) and 137–140 (NKVD). Residues 137 to 140 (NKVD) form a G4 region. The G5 stretch occupies residues 175-177 (SAL).

Belongs to the TRAFAC class translation factor GTPase superfamily. Classic translation factor GTPase family. EF-Tu/EF-1A subfamily. As to quaternary structure, monomer.

The protein localises to the cytoplasm. The enzyme catalyses GTP + H2O = GDP + phosphate + H(+). Its function is as follows. GTP hydrolase that promotes the GTP-dependent binding of aminoacyl-tRNA to the A-site of ribosomes during protein biosynthesis. The protein is Elongation factor Tu of Zymomonas mobilis subsp. mobilis (strain ATCC 31821 / ZM4 / CP4).